Reading from the N-terminus, the 789-residue chain is Phenylalanine--tRNA ligase beta subunit (789 aa).

The tRNA-binding domain maps to 38–151 (KKHLQSFVVV…NTYNVGESFF (114 aa)). A B5 domain is found at 398–474 (HNDILLNFSP…RLYGYDKILE (77 aa)). Asp452, Asp458, Glu461, and Glu462 together coordinate Mg(2+). Positions 694–787 (LRYQSVKRDF…ISKGFNGILR (94 aa)) constitute an FDX-ACB domain.

The protein belongs to the phenylalanyl-tRNA synthetase beta subunit family. Type 1 subfamily. As to quaternary structure, tetramer of two alpha and two beta subunits. The cofactor is Mg(2+).

The protein resides in the cytoplasm. It catalyses the reaction tRNA(Phe) + L-phenylalanine + ATP = L-phenylalanyl-tRNA(Phe) + AMP + diphosphate + H(+). This is Phenylalanine--tRNA ligase beta subunit from Ehrlichia ruminantium (strain Gardel).